A 509-amino-acid chain; its full sequence is ATP synthase subunit alpha (509 aa).

169 to 176 provides a ligand contact to ATP; that stretch reads GDRQTGKT.

This sequence belongs to the ATPase alpha/beta chains family. In terms of assembly, F-type ATPases have 2 components, CF(1) - the catalytic core - and CF(0) - the membrane proton channel. CF(1) has five subunits: alpha(3), beta(3), gamma(1), delta(1), epsilon(1). CF(0) has three main subunits: a(1), b(2) and c(9-12). The alpha and beta chains form an alternating ring which encloses part of the gamma chain. CF(1) is attached to CF(0) by a central stalk formed by the gamma and epsilon chains, while a peripheral stalk is formed by the delta and b chains.

The protein resides in the cell inner membrane. It carries out the reaction ATP + H2O + 4 H(+)(in) = ADP + phosphate + 5 H(+)(out). In terms of biological role, produces ATP from ADP in the presence of a proton gradient across the membrane. The alpha chain is a regulatory subunit. This Sinorhizobium fredii (strain NBRC 101917 / NGR234) protein is ATP synthase subunit alpha.